A 339-amino-acid chain; its full sequence is N-acetyl-gamma-glutamyl-phosphate reductase (339 aa).

Cys-145 is an active-site residue.

The protein belongs to the NAGSA dehydrogenase family. Type 1 subfamily.

The protein localises to the cytoplasm. It carries out the reaction N-acetyl-L-glutamate 5-semialdehyde + phosphate + NADP(+) = N-acetyl-L-glutamyl 5-phosphate + NADPH + H(+). The protein operates within amino-acid biosynthesis; L-arginine biosynthesis; N(2)-acetyl-L-ornithine from L-glutamate: step 3/4. Catalyzes the NADPH-dependent reduction of N-acetyl-5-glutamyl phosphate to yield N-acetyl-L-glutamate 5-semialdehyde. This chain is N-acetyl-gamma-glutamyl-phosphate reductase, found in Kosmotoga olearia (strain ATCC BAA-1733 / DSM 21960 / TBF 19.5.1).